A 232-amino-acid polypeptide reads, in one-letter code: Putative caffeoyl-CoA O-methyltransferase At1g67980 (232 aa).

Substrate is bound at residue K8. Residues V52, E74, 76 to 77, S82, and D100 contribute to the S-adenosyl-L-methionine site; that span reads GV. Residue D149 coordinates substrate. D149 contacts a divalent metal cation. Residue D151 coordinates S-adenosyl-L-methionine. D175 and N176 together coordinate a divalent metal cation.

This sequence belongs to the class I-like SAM-binding methyltransferase superfamily. Cation-dependent O-methyltransferase family. CCoAMT subfamily. Requires a divalent metal cation as cofactor.

The catalysed reaction is (E)-caffeoyl-CoA + S-adenosyl-L-methionine = (E)-feruloyl-CoA + S-adenosyl-L-homocysteine + H(+). It functions in the pathway aromatic compound metabolism; phenylpropanoid biosynthesis. In terms of biological role, methylates caffeoyl-CoA to feruloyl-CoA and 5-hydroxyferuloyl-CoA to sinapoyl-CoA. Plays a role in the synthesis of feruloylated polysaccharides. Involved in the reinforcement of the plant cell wall. Also involved in the responding to wounding or pathogen challenge by the increased formation of cell wall-bound ferulic acid polymers. The sequence is that of Putative caffeoyl-CoA O-methyltransferase At1g67980 from Arabidopsis thaliana (Mouse-ear cress).